A 589-amino-acid polypeptide reads, in one-letter code: Ectoderm-neural cortex protein 1 (589 aa).

A BTB domain is found at 46–114 (TDVLLHAGNR…AYSSRVIINE (69 aa)). Kelch repeat units follow at residues 296-340 (ALFL…AIGC), 341-388 (KVYI…ELKH), 389-444 (CLYV…SAKL), 446-492 (LFAF…VLGN), 494-538 (IFIM…ASGN), and 539-585 (KLYV…STWK).

As to quaternary structure, binds to RB1. Hypophosphorylated RB1 associates with ENC1 during neuronal differentiation, while hyperphosphorylated RB1 associates with ENC1 in undifferentiating cells. Part of a complex that contains CUL3, RBX1 and ENC1. Interacts indirectly with KEAP1. Ubiquitinated by E3 ubiquitin ligase complex formed by CUL3 and RBX1 and probably targeted for proteasome-independent degradation. Quinone-induced oxidative stress increases its ubiquitination. In terms of tissue distribution, primarily expressed in the nervous system.

The protein localises to the nucleus matrix. It is found in the cytoplasm. The protein resides in the cytoskeleton. Actin-binding protein involved in the regulation of neuronal process formation and in differentiation of neural crest cells. Down-regulates transcription factor NF2L2/NRF2 by decreasing the rate of protein synthesis and not via a ubiquitin-mediated proteasomal degradation mechanism. In Mus musculus (Mouse), this protein is Ectoderm-neural cortex protein 1 (Enc1).